The sequence spans 450 residues: Gluconate permease (450 aa).

12 consecutive transmembrane segments (helical) span residues 6-26 (HDAYLLLDALVTIIGLIVLIT), 30-50 (VHPFIALIIAAGFLGLTSGMP), 60-80 (DGFGGVLGFVGVILALGTMLG), 116-136 (VGIPLFFEIGFILLIPLVFIV), 142-162 (VSLIKIGIPLLAGLSAVHGLV), 183-203 (ILYGLIVALPTAAIAGPLFGA), 233-253 (FGVTLATVLLPVFLMLLKTFA), 269-289 (MIGHPISALLLALLVALYTFG), 312-332 (AIVMIIGAGGGFKQMLVASGV), 338-358 (HLAVNAQISPILLAWLVAAVI), 366-386 (TVATITGAGIVVPVIDLIPGV), and 430-450 (AMETILSVVGLVFILLLSLVL).

The protein belongs to the GntP permease family.

Its subcellular location is the cell inner membrane. It participates in carbohydrate acid metabolism; D-gluconate degradation. The polypeptide is Gluconate permease (gnuT) (Pseudomonas aeruginosa (strain ATCC 15692 / DSM 22644 / CIP 104116 / JCM 14847 / LMG 12228 / 1C / PRS 101 / PAO1)).